Reading from the N-terminus, the 338-residue chain is Mitoferrin-1 (338 aa).

Residues 1-42 are disordered; sequence MELRSGSVGSQAVARRMDGDSRDGGGGKDATGSEDYENLPTS. Over residues 15 to 26 the composition is skewed to basic and acidic residues; it reads RRMDGDSRDGGG. Solcar repeat units lie at residues 43–131, 141–225, and 232–326; these read ASVS…MKRT, NSHL…LQEQ, and YNPQ…FKYF. The next 6 helical transmembrane spans lie at 45–64, 106–125, 143–162, 200–219, 234–253, and 301–320; these read VSTH…SVMY, GVNV…FACY, HLAN…AVMN, SYTT…FITY, PQSH…AATT, and GIQA…WSVY.

The protein belongs to the mitochondrial carrier (TC 2.A.29) family. Interacts with ACB10; this interaction stabilizes SLC25A37 and enhances the function of SLC25A37 to import mitochondrial iron during erythroid differentiation.

Its subcellular location is the mitochondrion inner membrane. It catalyses the reaction Fe(2+)(in) = Fe(2+)(out). Its function is as follows. Mitochondrial iron transporter that specifically mediates iron uptake in developing erythroid cells, thereby playing an essential role in heme biosynthesis. The protein is Mitoferrin-1 (SLC25A37) of Homo sapiens (Human).